The following is a 57-amino-acid chain: UPF0391 membrane protein Nham_2738 (57 aa).

A run of 2 helical transmembrane segments spans residues 4–24 (WVVTFLIIALIAGILGFGGLA) and 30–50 (IAKIIFFIAVILFVVSAVVGL).

This sequence belongs to the UPF0391 family.

It is found in the cell membrane. The polypeptide is UPF0391 membrane protein Nham_2738 (Nitrobacter hamburgensis (strain DSM 10229 / NCIMB 13809 / X14)).